The following is a 318-amino-acid chain: Basic leucine zipper (bZIP) transcription factor atfB (318 aa).

Disordered stretches follow at residues 79–100 (LKNTHVRNGQPTPPPFDDKKLQ) and 114–164 (FNSS…EKRE). The interval 160–199 (REKREKFLERNRLAASKCRQKKKEHTKLLETRFREVSSKK) is basic motif. The 64-residue stretch at 160-223 (REKREKFLER…LNLKNEMLRH (64 aa)) folds into the bZIP domain. Residues 202 to 216 (LESEIEHLRSEVLNL) form a leucine-zipper region. The segment at 247–304 (TPNRDLVSPMRSPEQMTASTPHGLSFGFDGPMQLPSEMGSPLDQRRDSEQSIMTESSY) is disordered.

This sequence belongs to the bZIP family. ATF subfamily.

The protein localises to the nucleus. Functionally, transcription factor that acts as a key player in the regulatory circuit that integrates secondary metabolism and cellular response to oxidative stress. Regulates the genes involved in development, stress response, and secondary metabolism through direct binding to their promoters. Particularly involved in the resistance to oxidative stress in asexual conidiospores. Binds aflatoxin gene promoters carrying the cAMP-response element (CRE1) under aflatoxin-inducing conditions. The sequence is that of Basic leucine zipper (bZIP) transcription factor atfB from Aspergillus parasiticus (strain ATCC 56775 / NRRL 5862 / SRRC 143 / SU-1).